A 616-amino-acid polypeptide reads, in one-letter code: Protein LNK1 (616 aa).

Disordered stretches follow at residues 72–112 (GKNP…HGFN), 361–398 (ESKSGIKSENKPSPSSASNESYTSNHAQSIESLQGPTV), 410–434 (ANLLPGQDMPPSFAANTKKSSKTDS), and 567–616 (SSLS…SDNN). Positions 371–395 (KPSPSSASNESYTSNHAQSIESLQG) are enriched in polar residues. Positions 567 to 577 (SSLSSDNNVLS) are enriched in low complexity. Residues 594–608 (RIEKQEETTELRPEA) are compositionally biased toward basic and acidic residues.

As to quaternary structure, interacts with CCA1, LHY, REV4 and REV8, but not with PRR7 or PRR9. In terms of tissue distribution, expressed in roots, stems, leaves, seedlings, cotyledons, inflorescences and siliques. Highest expression in root tips, young leaves and vasculatur tissues.

It localises to the nucleus. Transcriptional coactivator necessary for expression of the clock genes PRR5 and TOC1. Antagonizes REV8 function in the regulation of anthocyanin accumulation. Involved in red light input to the clock. Activates clock-controlled genes with afternoon peak. Mediates light inhibition of hypocotyl elongation. The sequence is that of Protein LNK1 from Arabidopsis thaliana (Mouse-ear cress).